A 74-amino-acid chain; its full sequence is MAGFSKVIATIFLMMMLVFATGMVAEARTCESQSHRFKGLCFSKSNCGSVCHTEGFNGGHCRGFRRRCFCTRHC.

The signal sequence occupies residues 1–27 (MAGFSKVIATIFLMMMLVFATGMVAEA). Intrachain disulfides connect cysteine 30–cysteine 74, cysteine 41–cysteine 61, cysteine 47–cysteine 68, and cysteine 51–cysteine 70.

This sequence belongs to the DEFL family. Monomer. Expressed in flowers and in young fruits.

It localises to the secreted. Plant defense peptide with antifungal activity against F.oxysporum and B.cinerea. This chain is Defensin J1-2, found in Capsicum annuum (Capsicum pepper).